Consider the following 115-residue polypeptide: Ribonuclease P protein component (115 aa).

Belongs to the RnpA family. As to quaternary structure, consists of a catalytic RNA component (M1 or rnpB) and a protein subunit.

It catalyses the reaction Endonucleolytic cleavage of RNA, removing 5'-extranucleotides from tRNA precursor.. Functionally, RNaseP catalyzes the removal of the 5'-leader sequence from pre-tRNA to produce the mature 5'-terminus. It can also cleave other RNA substrates such as 4.5S RNA. The protein component plays an auxiliary but essential role in vivo by binding to the 5'-leader sequence and broadening the substrate specificity of the ribozyme. In Macrococcus caseolyticus (strain JCSC5402) (Macrococcoides caseolyticum), this protein is Ribonuclease P protein component.